We begin with the raw amino-acid sequence, 193 residues long: ATP-dependent Clp protease proteolytic subunit 1 (193 aa).

The active-site Nucleophile is the Ser98. His123 is an active-site residue.

This sequence belongs to the peptidase S14 family. As to quaternary structure, fourteen ClpP subunits assemble into 2 heptameric rings which stack back to back to give a disk-like structure with a central cavity, resembling the structure of eukaryotic proteasomes.

Its subcellular location is the cytoplasm. The enzyme catalyses Hydrolysis of proteins to small peptides in the presence of ATP and magnesium. alpha-casein is the usual test substrate. In the absence of ATP, only oligopeptides shorter than five residues are hydrolyzed (such as succinyl-Leu-Tyr-|-NHMec, and Leu-Tyr-Leu-|-Tyr-Trp, in which cleavage of the -Tyr-|-Leu- and -Tyr-|-Trp bonds also occurs).. In terms of biological role, cleaves peptides in various proteins in a process that requires ATP hydrolysis. Has a chymotrypsin-like activity. Plays a major role in the degradation of misfolded proteins. This chain is ATP-dependent Clp protease proteolytic subunit 1, found in Bacillus anthracis.